Consider the following 115-residue polypeptide: MNFMLTLLTNTLLALLLVTIAFWLPQTNVYSEKSSPYECGFDPMGSARLPFSMKFFLVAITFLLFDLEIALLLPLPWASQANNLEVMLTTALLLISLLAISLAYEWSQKGLEWTE.

Transmembrane regions (helical) follow at residues 3–23 (FMLT…IAFW), 55–75 (FFLV…LLPL), and 84–104 (LEVM…SLAY).

The protein belongs to the complex I subunit 3 family. As to quaternary structure, core subunit of respiratory chain NADH dehydrogenase (Complex I) which is composed of 45 different subunits. Interacts with TMEM186. Interacts with TMEM242.

It localises to the mitochondrion inner membrane. It catalyses the reaction a ubiquinone + NADH + 5 H(+)(in) = a ubiquinol + NAD(+) + 4 H(+)(out). Its function is as follows. Core subunit of the mitochondrial membrane respiratory chain NADH dehydrogenase (Complex I) which catalyzes electron transfer from NADH through the respiratory chain, using ubiquinone as an electron acceptor. Essential for the catalytic activity of complex I. In Rhinolophus pumilus (Horseshoe bat), this protein is NADH-ubiquinone oxidoreductase chain 3.